A 393-amino-acid chain; its full sequence is Tryptophan synthase beta chain (393 aa).

At K86 the chain carries N6-(pyridoxal phosphate)lysine.

Belongs to the TrpB family. In terms of assembly, tetramer of two alpha and two beta chains. Pyridoxal 5'-phosphate serves as cofactor.

The enzyme catalyses (1S,2R)-1-C-(indol-3-yl)glycerol 3-phosphate + L-serine = D-glyceraldehyde 3-phosphate + L-tryptophan + H2O. Its pathway is amino-acid biosynthesis; L-tryptophan biosynthesis; L-tryptophan from chorismate: step 5/5. In terms of biological role, the beta subunit is responsible for the synthesis of L-tryptophan from indole and L-serine. The protein is Tryptophan synthase beta chain of Alteromonas mediterranea (strain DSM 17117 / CIP 110805 / LMG 28347 / Deep ecotype).